The chain runs to 427 residues: MEGMERPISEAYFQEAKRHIPGGVSSPVRAFKAVGGTPPFLVRGEGAYVWDADGNRYLDYVMSWGPLILGHAHPKVLARVRETLERGLTFGAPSPLEVALAKKVKRAYPFVDLVRFVNSGTEATMSALRLARGYTNRPYIVKFRGNYHGHADGLLVEAGSGALTLGVPSSAGVPEEYAKLTLVLEYNDPEGLREVLRRRGEEIAAIIFEPVVGNAGVLVPTEDFLKALHEAREFGVLLIADEVMTGFRLAFGGATELLGLKPDLVTLGKVLGGGLPAAAYAGRREIMEKVAPLGPVYQAGTLSGNPLAMAAGLATLELLEENPGYYRYLEDLGARLERGLKEVLAQKGIPHAVNRVGSMVTVFFTEGPVVTFQDAKRTDTELFKRFFHGLLDRGIYWPPSNFEAAFLSVAHTEEDVEKTLEALGEAL.

Lys269 carries the N6-(pyridoxal phosphate)lysine modification.

It belongs to the class-III pyridoxal-phosphate-dependent aminotransferase family. HemL subfamily. Homodimer. Pyridoxal 5'-phosphate serves as cofactor.

The protein resides in the cytoplasm. The enzyme catalyses (S)-4-amino-5-oxopentanoate = 5-aminolevulinate. It participates in porphyrin-containing compound metabolism; protoporphyrin-IX biosynthesis; 5-aminolevulinate from L-glutamyl-tRNA(Glu): step 2/2. This Thermus thermophilus (strain ATCC BAA-163 / DSM 7039 / HB27) protein is Glutamate-1-semialdehyde 2,1-aminomutase.